Consider the following 354-residue polypeptide: Protein-glutamate methylesterase/protein-glutamine glutaminase 2 (354 aa).

The Response regulatory domain occupies 5–122 (RVLIVDDSAL…SLKIKEVAEE (118 aa)). The residue at position 56 (aspartate 56) is a 4-aspartylphosphate. The region spanning 159 to 354 (PDTSFKKLIL…IADRIVELVR (196 aa)) is the CheB-type methylesterase domain. Residues serine 172, histidine 199, and aspartate 298 contribute to the active site.

The protein belongs to the CheB family. Phosphorylated by CheA. Phosphorylation of the N-terminal regulatory domain activates the methylesterase activity.

It localises to the cytoplasm. It catalyses the reaction [protein]-L-glutamate 5-O-methyl ester + H2O = L-glutamyl-[protein] + methanol + H(+). The enzyme catalyses L-glutaminyl-[protein] + H2O = L-glutamyl-[protein] + NH4(+). In terms of biological role, involved in chemotaxis. Part of a chemotaxis signal transduction system that modulates chemotaxis in response to various stimuli. Catalyzes the demethylation of specific methylglutamate residues introduced into the chemoreceptors (methyl-accepting chemotaxis proteins or MCP) by CheR. Also mediates the irreversible deamidation of specific glutamine residues to glutamic acid. This chain is Protein-glutamate methylesterase/protein-glutamine glutaminase 2, found in Carboxydothermus hydrogenoformans (strain ATCC BAA-161 / DSM 6008 / Z-2901).